Reading from the N-terminus, the 236-residue chain is N-acetyl-alpha-D-glucosaminyl L-malate deacetylase 1 (236 aa).

Zn(2+)-binding residues include H12, D15, and H113.

Belongs to the PIGL family. The cofactor is Zn(2+).

The enzyme catalyses (S)-malyl N-acetyl-alpha-D-glucosaminide + H2O = (S)-malyl alpha-D-glucosaminide + acetate. Involved in bacillithiol (BSH) biosynthesis. Catalyzes the second step of the pathway, the deacetylation of N-acetylglucosaminylmalate (GlcNAc-Mal) to glucosamine malate (GlcN-Mal). This chain is N-acetyl-alpha-D-glucosaminyl L-malate deacetylase 1, found in Bacillus subtilis (strain 168).